The chain runs to 99 residues: Translation initiation factor 1A (99 aa).

One can recognise an S1-like domain in the interval 11–84; sequence RRVRTPRRGE…EKADIVWRYT (74 aa).

This sequence belongs to the eIF-1A family.

Seems to be required for maximal rate of protein biosynthesis. Enhances ribosome dissociation into subunits and stabilizes the binding of the initiator Met-tRNA(I) to 40 S ribosomal subunits. This chain is Translation initiation factor 1A (eIF1A), found in Methanothermobacter thermautotrophicus (strain ATCC 29096 / DSM 1053 / JCM 10044 / NBRC 100330 / Delta H) (Methanobacterium thermoautotrophicum).